The primary structure comprises 141 residues: D-aminoacyl-tRNA deacylase (141 aa).

The short motif at 133-134 (GP) is the Gly-cisPro motif, important for rejection of L-amino acids element.

Belongs to the DTD family. As to quaternary structure, homodimer.

The protein resides in the cytoplasm. It carries out the reaction glycyl-tRNA(Ala) + H2O = tRNA(Ala) + glycine + H(+). The catalysed reaction is a D-aminoacyl-tRNA + H2O = a tRNA + a D-alpha-amino acid + H(+). In terms of biological role, an aminoacyl-tRNA editing enzyme that deacylates mischarged D-aminoacyl-tRNAs. Also deacylates mischarged glycyl-tRNA(Ala), protecting cells against glycine mischarging by AlaRS. Acts via tRNA-based rather than protein-based catalysis; rejects L-amino acids rather than detecting D-amino acids in the active site. By recycling D-aminoacyl-tRNA to D-amino acids and free tRNA molecules, this enzyme counteracts the toxicity associated with the formation of D-aminoacyl-tRNA entities in vivo and helps enforce protein L-homochirality. This is D-aminoacyl-tRNA deacylase from Beutenbergia cavernae (strain ATCC BAA-8 / DSM 12333 / CCUG 43141 / JCM 11478 / NBRC 16432 / NCIMB 13614 / HKI 0122).